A 101-amino-acid chain; its full sequence is Apolipoprotein C-II (101 aa).

A signal peptide spans 1-22 (MGTRFLLALCLVLLVLGFEVQG). The tract at residues 66 to 74 (AVDEKLRDL) is lipid binding. The segment at 78 to 101 (STAAMSTYTGIFTDQVLSVLKGEE) is lipoprotein lipase cofactor.

Belongs to the apolipoprotein C2 family. Post-translationally, proapolipoprotein C-II is synthesized as a sialic acid containing glycoprotein which is subsequently desialylated prior to its proteolytic processing. Proapolipoprotein C-II, the major form found in plasma undergoes proteolytic cleavage of its N-terminal hexapeptide to generate apolipoprotein C-II, which occurs as the minor form in plasma.

It is found in the secreted. Its function is as follows. Component of chylomicrons, very low-density lipoproteins (VLDL), low-density lipoproteins (LDL), and high-density lipoproteins (HDL) in plasma. Plays an important role in lipoprotein metabolism as an activator of lipoprotein lipase. Both proapolipoprotein C-II and apolipoprotein C-II can activate lipoprotein lipase. This is Apolipoprotein C-II (APOC2) from Colobus guereza (Mantled guereza).